We begin with the raw amino-acid sequence, 426 residues long: Serine--tRNA ligase (426 aa).

233 to 235 (TAE) contributes to the L-serine binding site. An ATP-binding site is contributed by 264-266 (RSE). E287 contributes to the L-serine binding site. An ATP-binding site is contributed by 351 to 354 (EISS). An L-serine-binding site is contributed by S387.

The protein belongs to the class-II aminoacyl-tRNA synthetase family. Type-1 seryl-tRNA synthetase subfamily. As to quaternary structure, homodimer. The tRNA molecule binds across the dimer.

The protein localises to the cytoplasm. It carries out the reaction tRNA(Ser) + L-serine + ATP = L-seryl-tRNA(Ser) + AMP + diphosphate + H(+). The enzyme catalyses tRNA(Sec) + L-serine + ATP = L-seryl-tRNA(Sec) + AMP + diphosphate + H(+). Its pathway is aminoacyl-tRNA biosynthesis; selenocysteinyl-tRNA(Sec) biosynthesis; L-seryl-tRNA(Sec) from L-serine and tRNA(Sec): step 1/1. Functionally, catalyzes the attachment of serine to tRNA(Ser). Is also able to aminoacylate tRNA(Sec) with serine, to form the misacylated tRNA L-seryl-tRNA(Sec), which will be further converted into selenocysteinyl-tRNA(Sec). This is Serine--tRNA ligase from Pseudomonas putida (strain ATCC 700007 / DSM 6899 / JCM 31910 / BCRC 17059 / LMG 24140 / F1).